Here is a 232-residue protein sequence, read N- to C-terminus: Nucleoside diphosphate kinase 2, chloroplastic (232 aa).

The N-terminal 79 residues, 1 to 79, are a transit peptide targeting the chloroplast; sequence MGCLSVVGAS…TRIFLPHLVA (79 aa). Residues lysine 92, phenylalanine 140, arginine 168, threonine 174, arginine 185, and asparagine 195 each contribute to the ATP site. Histidine 198 (pros-phosphohistidine intermediate) is an active-site residue.

The protein belongs to the NDK family. The cofactor is Mg(2+).

The protein resides in the plastid. The protein localises to the chloroplast. The catalysed reaction is a 2'-deoxyribonucleoside 5'-diphosphate + ATP = a 2'-deoxyribonucleoside 5'-triphosphate + ADP. The enzyme catalyses a ribonucleoside 5'-diphosphate + ATP = a ribonucleoside 5'-triphosphate + ADP. In terms of biological role, major role in the synthesis of nucleoside triphosphates other than ATP. The ATP gamma phosphate is transferred to the NDP beta phosphate via a ping-pong mechanism, using a phosphorylated active-site intermediate. This chain is Nucleoside diphosphate kinase 2, chloroplastic, found in Nicotiana tabacum (Common tobacco).